Here is a 688-residue protein sequence, read N- to C-terminus: NADPH-dependent diflavin oxidoreductase 1 (688 aa).

The interval H26–A76 is disordered. The span at T33–G58 shows a compositional bias: polar residues. Positions E59–H68 are enriched in basic and acidic residues. One can recognise a Flavodoxin-like domain in the interval I82–C227. Residues T88–A93, S136–G139, L174–N183, and D209 each bind FMN. One can recognise an FAD-binding FR-type domain in the interval K277–D543. FAD contacts are provided by residues R453, R483–S486, and G515–T518. NADP(+)-binding positions include T554, S607–R608, and G613–Q617. W688 contacts FAD.

The protein belongs to the NADPH-dependent diflavin oxidoreductase NDOR1 family. This sequence in the N-terminal section; belongs to the flavodoxin family. It in the C-terminal section; belongs to the flavoprotein pyridine nucleotide cytochrome reductase family. As to quaternary structure, interacts with DRE2; as part of the cytosolic iron-sulfur (Fe-S) protein assembly (CIA) machinery. FAD serves as cofactor. It depends on FMN as a cofactor.

The protein resides in the cytoplasm. Its subcellular location is the mitochondrion. It catalyses the reaction 2 oxidized [2Fe-2S]-[protein] + NADPH = 2 reduced [2Fe-2S]-[protein] + NADP(+) + H(+). Functionally, NADPH-dependent reductase which is a central component of the cytosolic iron-sulfur (Fe-S) protein assembly (CIA) machinery. Transfers electrons from NADPH via its FAD and FMN prosthetic groups to the [2Fe-2S] cluster of DRE2, another key component of the CIA machinery. In turn, this reduced cluster provides electrons for assembly of cytosolic iron-sulfur cluster proteins. Positively controls H(2)O(2)-induced cell death. In Yarrowia lipolytica (strain CLIB 122 / E 150) (Yeast), this protein is NADPH-dependent diflavin oxidoreductase 1.